We begin with the raw amino-acid sequence, 430 residues long: Serine--tRNA ligase (430 aa).

238–240 (TAE) serves as a coordination point for L-serine. 269–271 (RRE) contacts ATP. Glutamate 292 lines the L-serine pocket. Residue 356 to 359 (EISS) coordinates ATP. Serine 392 serves as a coordination point for L-serine.

The protein belongs to the class-II aminoacyl-tRNA synthetase family. Type-1 seryl-tRNA synthetase subfamily. As to quaternary structure, homodimer. The tRNA molecule binds across the dimer.

It is found in the cytoplasm. It catalyses the reaction tRNA(Ser) + L-serine + ATP = L-seryl-tRNA(Ser) + AMP + diphosphate + H(+). The catalysed reaction is tRNA(Sec) + L-serine + ATP = L-seryl-tRNA(Sec) + AMP + diphosphate + H(+). It functions in the pathway aminoacyl-tRNA biosynthesis; selenocysteinyl-tRNA(Sec) biosynthesis; L-seryl-tRNA(Sec) from L-serine and tRNA(Sec): step 1/1. Its function is as follows. Catalyzes the attachment of serine to tRNA(Ser). Is also able to aminoacylate tRNA(Sec) with serine, to form the misacylated tRNA L-seryl-tRNA(Sec), which will be further converted into selenocysteinyl-tRNA(Sec). The polypeptide is Serine--tRNA ligase (Synechocystis sp. (strain ATCC 27184 / PCC 6803 / Kazusa)).